The chain runs to 163 residues: MANESNNLGLEITELRLGLPGDIVVSGESISGKKRASPEVEIDLKCEPAKKSQVVGWPPVCSYRRKNSLERTKSSYVKVSVDGAAFLRKIDLEMYKCYQDLASALQILFGCYINFDDTLKESECVPIYEDKDGDWMLAGDVPWEMFLGSCKRLRIMKRSCNRG.

An EAR-like (transcriptional repression) motif is present at residues 15–19; the sequence is LRLGL. The region spanning 74–160 is the PB1 domain; sequence SSYVKVSVDG…KRLRIMKRSC (87 aa).

It belongs to the Aux/IAA family. As to quaternary structure, homodimers and heterodimers. Highly expressed in stems and flowers.

It is found in the nucleus. Aux/IAA proteins are short-lived transcriptional factors that function as repressors of early auxin response genes at low auxin concentrations. Repression is thought to result from the interaction with auxin response factors (ARFs), proteins that bind to the auxin-responsive promoter element (AuxRE). Formation of heterodimers with ARF proteins may alter their ability to modulate early auxin response genes expression. The sequence is that of Auxin-responsive protein IAA5 (IAA5) from Arabidopsis thaliana (Mouse-ear cress).